The primary structure comprises 164 residues: Thioredoxin domain-containing protein R443 (164 aa).

The helical transmembrane segment at 8 to 28 threads the bilayer; the sequence is HIVLIVLAIILILWIISLLLC. The 128-residue stretch at 36–163 folds into the Thioredoxin domain; sequence YQVPIIQPMQ…LTQFIRSNMN (128 aa). A disulfide bond links Cys-84 and Cys-87.

The protein belongs to the thioredoxin family.

It is found in the host membrane. Its subcellular location is the virion. This is Thioredoxin domain-containing protein R443 from Acanthamoeba polyphaga mimivirus (APMV).